Here is a 223-residue protein sequence, read N- to C-terminus: Na(+)-translocating NADH-quinone reductase subunit D (223 aa).

5 helical membrane passes run Thr42 to Ile62, Ile66 to Val86, Val103 to Met123, Phe131 to Ile151, and Asn178 to Leu198.

It belongs to the NqrDE/RnfAE family. Composed of six subunits; NqrA, NqrB, NqrC, NqrD, NqrE and NqrF.

The protein localises to the cell inner membrane. The enzyme catalyses a ubiquinone + n Na(+)(in) + NADH + H(+) = a ubiquinol + n Na(+)(out) + NAD(+). NQR complex catalyzes the reduction of ubiquinone-1 to ubiquinol by two successive reactions, coupled with the transport of Na(+) ions from the cytoplasm to the periplasm. NqrA to NqrE are probably involved in the second step, the conversion of ubisemiquinone to ubiquinol. This chain is Na(+)-translocating NADH-quinone reductase subunit D, found in Pseudomonas paraeruginosa (strain DSM 24068 / PA7) (Pseudomonas aeruginosa (strain PA7)).